The following is a 406-amino-acid chain: Peptide chain release factor PrfB3, chloroplastic (406 aa).

Belongs to the prokaryotic/mitochondrial release factor family. In terms of assembly, interacts with PDE338.

The protein localises to the plastid. It is found in the chloroplast stroma. It localises to the chloroplast. Its function is as follows. Involved in the light- and stress-dependent regulation of stability of 3' processed petB transcripts, thus regulating cytochrome b6 accumulation, a rate-limiting step in photosynthetic electron transport. May be recruited to specifically protect petB transcripts against 3'-5' exonucleolytic attack by masking the 3' ends. Does not function as release factor. The polypeptide is Peptide chain release factor PrfB3, chloroplastic (Arabidopsis thaliana (Mouse-ear cress)).